We begin with the raw amino-acid sequence, 550 residues long: ATP synthase subunit alpha (550 aa).

Glycine 172–threonine 179 lines the ATP pocket. Residues glutamate 521–serine 550 are disordered. The segment covering glutamate 534–serine 550 has biased composition (basic and acidic residues).

This sequence belongs to the ATPase alpha/beta chains family. As to quaternary structure, F-type ATPases have 2 components, CF(1) - the catalytic core - and CF(0) - the membrane proton channel. CF(1) has five subunits: alpha(3), beta(3), gamma(1), delta(1), epsilon(1). CF(0) has three main subunits: a(1), b(2) and c(9-12). The alpha and beta chains form an alternating ring which encloses part of the gamma chain. CF(1) is attached to CF(0) by a central stalk formed by the gamma and epsilon chains, while a peripheral stalk is formed by the delta and b chains.

It is found in the cell membrane. It catalyses the reaction ATP + H2O + 4 H(+)(in) = ADP + phosphate + 5 H(+)(out). Produces ATP from ADP in the presence of a proton gradient across the membrane. The alpha chain is a regulatory subunit. This Salinispora tropica (strain ATCC BAA-916 / DSM 44818 / JCM 13857 / NBRC 105044 / CNB-440) protein is ATP synthase subunit alpha.